The following is a 429-amino-acid chain: Histidine--tRNA ligase (429 aa).

Belongs to the class-II aminoacyl-tRNA synthetase family. In terms of assembly, homodimer.

It is found in the cytoplasm. The catalysed reaction is tRNA(His) + L-histidine + ATP = L-histidyl-tRNA(His) + AMP + diphosphate + H(+). The chain is Histidine--tRNA ligase from Streptococcus mutans serotype c (strain ATCC 700610 / UA159).